A 131-amino-acid chain; its full sequence is UPF0102 protein YraN (131 aa).

The protein belongs to the UPF0102 family.

This is UPF0102 protein YraN from Salmonella arizonae (strain ATCC BAA-731 / CDC346-86 / RSK2980).